Here is a 159-residue protein sequence, read N- to C-terminus: Neuroglobin (159 aa).

A Globin domain is found at 3-151 (KLSEKDKELI…VVAAMSQGWA (149 aa)). Positions 66 and 98 each coordinate heme b.

This sequence belongs to the globin family. As to quaternary structure, monomer. Homodimers and homotetramers. Mainly monomeric but also detected as part of homodimers and homotetramers.

It is found in the cytoplasm. Its subcellular location is the cytosol. The protein resides in the mitochondrion matrix. The catalysed reaction is Fe(III)-heme b-[protein] + nitric oxide + H2O = Fe(II)-heme b-[protein] + nitrite + 2 H(+). Monomeric globin with a bis-histidyl six-coordinate heme-iron atom through which it can bind dioxygen, carbon monoxide and nitric oxide. Could help transport oxygen and increase its availability to the metabolically active neuronal tissues, though its low quantity in tissues as well as its high affinity for dioxygen, which may limit its oxygen-releasing ability, argue against it. The ferrous/deoxygenated form exhibits a nitrite reductase activity and it could produce nitric oxide which in turn inhibits cellular respiration in response to hypoxia. In its ferrous/deoxygenated state, it may also exhibit GDI (Guanine nucleotide Dissociation Inhibitor) activity toward heterotrimeric G-alpha proteins, thereby regulating signal transduction to facilitate neuroprotective responses in the wake of hypoxia and associated oxidative stress. This is Neuroglobin (ngb) from Dissostichus mawsoni (Antarctic cod).